The primary structure comprises 102 residues: NADH-quinone oxidoreductase subunit K (102 aa).

The next 3 helical transmembrane spans lie at 6 to 26, 30 to 50, and 62 to 82; these read MEHG…GLMV, ILFV…AFVV, and IMFI…LAIL.

It belongs to the complex I subunit 4L family. In terms of assembly, NDH-1 is composed of 13 different subunits. Subunits NuoA, H, J, K, L, M, N constitute the membrane sector of the complex.

The protein localises to the cell inner membrane. It catalyses the reaction a quinone + NADH + 5 H(+)(in) = a quinol + NAD(+) + 4 H(+)(out). NDH-1 shuttles electrons from NADH, via FMN and iron-sulfur (Fe-S) centers, to quinones in the respiratory chain. The immediate electron acceptor for the enzyme in this species is believed to be ubiquinone. Couples the redox reaction to proton translocation (for every two electrons transferred, four hydrogen ions are translocated across the cytoplasmic membrane), and thus conserves the redox energy in a proton gradient. This chain is NADH-quinone oxidoreductase subunit K, found in Azotobacter vinelandii (strain DJ / ATCC BAA-1303).